A 748-amino-acid polypeptide reads, in one-letter code: Meprin A subunit alpha (748 aa).

An N-terminal signal peptide occupies residues 1–20; sequence MLWTLPVCLLSLSFSAHIAA. The propeptide occupies 21–66; that stretch reads VSIQHLSTGHDHDDVDVGEQQKDISEINSAAGLNLFQGDILLPRTR. The Peptidase M12A domain occupies 67-261; it reads NALRDPSSRW…TRLNRMYNCT (195 aa). Residues 67–719 are Extracellular-facing; the sequence is NALRDPSSRW…RCQAMHVHGS (653 aa). Intrachain disulfides connect cysteine 108-cysteine 260, cysteine 129-cysteine 148, and cysteine 270-cysteine 432. The N-linked (GlcNAc...) asparagine glycan is linked to asparagine 141. Zn(2+) is bound at residue histidine 156. Glutamate 157 is an active-site residue. Zn(2+) is bound by residues histidine 160 and histidine 166. N-linked (GlcNAc...) asparagine glycans are attached at residues asparagine 223, asparagine 259, asparagine 319, asparagine 441, and asparagine 542. An MAM domain is found at 265–434; that stretch reads TLLDHCAFEK…ITLTETPCPT (170 aa). Positions 435–596 constitute an MATH domain; that stretch reads GVWTIRNISQ…DDTLIIFVDF (162 aa). Positions 641–668 are disordered; it reads LPRRLDQRQPSRPKRSVENTGPMEDHNW. An EGF-like domain is found at 672 to 712; sequence FRDPCDPNPCQNEGTCVNVKGMASCRCVSGHAFFYTGERCQ. Disulfide bonds link cysteine 676–cysteine 687, cysteine 681–cysteine 696, and cysteine 698–cysteine 711. A helical transmembrane segment spans residues 720–739; the sequence is LLGLLIGCITALIFLTFITF. Residues 740-748 are Cytoplasmic-facing; the sequence is SNTYQKLRQ.

In terms of assembly, homotetramer consisting of disulfide-linked alpha subunits, homooligomer consisting of disulfide-linked alpha subunit homodimers, or heterotetramer of two alpha and two beta subunits formed by non-covalent association of two disulfide-linked heterodimers. Interacts with MBL2 through its carbohydrate moiety. This interaction may inhibit its catalytic activity. It depends on Zn(2+) as a cofactor. Post-translationally, N-glycosylated; contains GlcNAc, galactose, mannose and a small amount of fucose. Colocalized with E-24.11 in proximal tubules of juxtamedullary nephrons.

Its subcellular location is the membrane. It carries out the reaction Hydrolysis of protein and peptide substrates preferentially on carboxyl side of hydrophobic residues.. With respect to regulation, inhibited by actinonin. The polypeptide is Meprin A subunit alpha (Mep1a) (Rattus norvegicus (Rat)).